A 930-amino-acid chain; its full sequence is MTAATVRGGTPRDSVVSVSNRWEGAGVNKGYAVYCDADPYFYDAPHRTADRTGAARSRYAAASSPVPEGWQRHESGDWLALRPADADLPAQGWKIHVSACLDNAESVLDRVWRHCVDGGTAFKFVPSRYLLHQRNAKYADRAGSGKFVTVYPADEAEFERLVGELSELLAGEPGPHILSDLRIGDGPVHVRYGGFTRRDCYDADGELRPAVSGPDGVLVPDLRGPVFRIPEWVDPPAFLRPHLDARSAVTVTGMPYTVESALHFSNGGGVYLARDTRTGARVVLKEARPHAGLAADGADAVTRLHRERRALERLSGLACTPEVLDHRTVGEHHFLVLEHIDGKPLNTFFARRHPLIEADPGERRLAEYTDWALDVHARVERAVAEVHARGVVFNDLHLFNIMVRDDDSVALLDFEAAHHVDEAGRQIVANPGFVAPPDRRGVAVDRYALACLRIVLFLPLTSLLAVDRHKAAHLAEVVAEQFPVDRAFLDAAVEEITRVDGSTRVDGSTRADETTRADETTRLDVTTRVHGAPDAARRPAGPVAPVRPDDWPRSRDSMAAAIRASATPSRTDRLFPGDIAQFATAGGGLAFAHGAAGVLYALAESGAGRDEDGEQWLLERTKRPPSGMPLGFHDGLAGLAWTLERLGHRDRALDLAELLLDQPLDHLGPDLHGGTAGLGLALESLAATTGQAALHSAALHCAELAADGLPGGSVPADRVSRGRARAGLLYGGAGRALLFLRLFERTRDSALLDLARDALRQDLARCVRGAGGALQVDEGWRTMPYLGAGSVGIGMVLDDYLAHRADEEFARAANEIVAAAQAMFYAQPGLYRGVAGMVLHLGRTTATAPGTGPRAVRRQLDALSWHAMSYRDRLAFPGEQMMRLSMDLSTGTAGCLLAVASVLGDAPAGLPFLPPPRRSGGPLTRPHQEP.

Residues 256 to 516 (YTVESALHFS…GSTRADETTR (261 aa)) enclose the Protein kinase domain. ATP contacts are provided by residues 262-270 (LHFSNGGGV) and Lys285. Catalysis depends on Asp395, which acts as the Proton acceptor. The chain crosses the membrane as a helical span at residues 447–467 (YALACLRIVLFLPLTSLLAVD). Residues 501–527 (GSTRVDGSTRADETTRADETTRLDVTT) are compositionally biased toward basic and acidic residues. Disordered regions lie at residues 501-558 (GSTR…RDSM) and 911-930 (PFLPPPRRSGGPLTRPHQEP). The segment covering 532-546 (APDAARRPAGPVAPV) has biased composition (low complexity). The span at 547 to 556 (RPDDWPRSRD) shows a compositional bias: basic and acidic residues.

The protein in the N-terminal section; belongs to the protein kinase superfamily.

Its subcellular location is the cell membrane. Its function is as follows. Required for aerial hyphae formation. Probably involved in processing the precursor of SapB to its mature form. This Streptomyces coelicolor (strain ATCC BAA-471 / A3(2) / M145) protein is Probable SapB synthase.